Consider the following 283-residue polypeptide: MRVEFTKYQGLGNDFILIDNRHQAQPCLTPDQAVQMCDRNFGIGGDGVIFALPPEGDTDYTMRIYNSDGSEPEMCGNGIRCLARFLAHLEGKPLQTDITYRIHTLAGTITPSLQADGLVKVDMGPPFLVPQEIPTTLGEGTDPVVNQPLEVAGQSWPVTCVSMGNPHCITFVDDLEAIDFQTLGPQFEHHPVFPQRINTEFIQVIRPDYLKMLVWERGAGPTLACGTGACAVLVAGVLTGKSQSQATIELPGGPLQIRWAGEGQSVFMTGPAEKVFTGIYETG.

Substrate contacts are provided by Asn13 and Asn66. Residue Cys75 is the Proton donor of the active site. Residues 76–77, Asn165, Asn198, and 216–217 each bind substrate; these read GN and ER. Cys225 functions as the Proton acceptor in the catalytic mechanism. 226 to 227 lines the substrate pocket; that stretch reads GT.

It belongs to the diaminopimelate epimerase family. In terms of assembly, homodimer.

Its subcellular location is the cytoplasm. It catalyses the reaction (2S,6S)-2,6-diaminopimelate = meso-2,6-diaminopimelate. The protein operates within amino-acid biosynthesis; L-lysine biosynthesis via DAP pathway; DL-2,6-diaminopimelate from LL-2,6-diaminopimelate: step 1/1. Catalyzes the stereoinversion of LL-2,6-diaminopimelate (L,L-DAP) to meso-diaminopimelate (meso-DAP), a precursor of L-lysine and an essential component of the bacterial peptidoglycan. The sequence is that of Diaminopimelate epimerase from Acaryochloris marina (strain MBIC 11017).